The chain runs to 289 residues: uncharacterized protein (289 aa).

Residues 2–62 form the HTH tetR-type domain; that stretch reads NEKKERIIKT…SACEYYIGMS (61 aa). A DNA-binding region (H-T-H motif) is located at residues 25–44; it reads TIQEIASECGISKGAFYLHF.

This is an uncharacterized protein from Bacillus subtilis (strain 168).